Here is a 141-residue protein sequence, read N- to C-terminus: Hemoglobin subunit alpha (141 aa).

In terms of domain architecture, Globin spans 1-141 (VLSAADKSNV…VSTVLTSKYR (141 aa)). Residue S3 is modified to Phosphoserine. K7 and K11 each carry N6-succinyllysine. An N6-acetyllysine; alternate modification is found at K16. The residue at position 16 (K16) is an N6-succinyllysine; alternate. At Y24 the chain carries Phosphotyrosine. The residue at position 35 (S35) is a Phosphoserine. N6-succinyllysine is present on K40. Position 49 is a phosphoserine (S49). H58 provides a ligand contact to O2. Position 87 (H87) interacts with heme b. A Phosphoserine modification is found at S102. A Phosphothreonine modification is found at T108. A Phosphoserine modification is found at S124. Residues T134 and T137 each carry the phosphothreonine modification. S138 is subject to Phosphoserine.

It belongs to the globin family. As to quaternary structure, heterotetramer of two alpha chains and two beta chains. As to expression, red blood cells.

Its function is as follows. Involved in oxygen transport from the lung to the various peripheral tissues. In terms of biological role, hemopressin acts as an antagonist peptide of the cannabinoid receptor CNR1. Hemopressin-binding efficiently blocks cannabinoid receptor CNR1 and subsequent signaling. This is Hemoglobin subunit alpha (HBA) from Felis catus (Cat).